The primary structure comprises 138 residues: ATP synthase epsilon chain (138 aa).

This sequence belongs to the ATPase epsilon chain family. As to quaternary structure, F-type ATPases have 2 components, CF(1) - the catalytic core - and CF(0) - the membrane proton channel. CF(1) has five subunits: alpha(3), beta(3), gamma(1), delta(1), epsilon(1). CF(0) has three main subunits: a, b and c.

The protein resides in the cell inner membrane. Its function is as follows. Produces ATP from ADP in the presence of a proton gradient across the membrane. This is ATP synthase epsilon chain from Cupriavidus pinatubonensis (strain JMP 134 / LMG 1197) (Cupriavidus necator (strain JMP 134)).